The primary structure comprises 170 residues: MSVLQVLHYPDERLRKIAAPVKEVNGEIQRIVDDMFETMYAEEGIGLAATQVDVHQQIIVIDISENRDQRLVLINPELLEKSGETGIEEGCLSIPEQRALVPRAEKVKIRALDRDGKPFELETDGLLAICIQHEMDHLIGKLFVDYLSPLKRQRIRQKLEKMAKLNARAN.

Residues Cys91 and His133 each contribute to the Fe cation site. Residue Glu134 is part of the active site. A Fe cation-binding site is contributed by His137.

It belongs to the polypeptide deformylase family. The cofactor is Fe(2+).

The enzyme catalyses N-terminal N-formyl-L-methionyl-[peptide] + H2O = N-terminal L-methionyl-[peptide] + formate. Functionally, removes the formyl group from the N-terminal Met of newly synthesized proteins. Requires at least a dipeptide for an efficient rate of reaction. N-terminal L-methionine is a prerequisite for activity but the enzyme has broad specificity at other positions. The protein is Peptide deformylase of Yersinia pseudotuberculosis serotype O:1b (strain IP 31758).